The following is an 84-amino-acid chain: LYR motif-containing protein 5B (84 aa).

Belongs to the complex I LYR family.

This Danio rerio (Zebrafish) protein is LYR motif-containing protein 5B (lyrm5b).